The chain runs to 129 residues: uncharacterized protein (129 aa).

The next 2 helical transmembrane spans lie at 4–24 and 37–57; these read FKFL…ILII and VISL…DLSI.

The protein to B.burgdorferi BBF20.

Its subcellular location is the cell membrane. This is an uncharacterized protein from Borreliella burgdorferi (strain ATCC 35210 / DSM 4680 / CIP 102532 / B31) (Borrelia burgdorferi).